Reading from the N-terminus, the 145-residue chain is Basic phospholipase A2 beta-bungarotoxin A-AL1 chain (145 aa).

A signal peptide spans 1–17; it reads MLIFLWCGAVCVSLLGA. A propeptide spanning residues 18-25 is cleaved from the precursor; that stretch reads ANIPPHPL. 5 disulfides stabilise this stretch: C52–C144, C54–C70, C76–C118, C86–C111, and C104–C116. The Ca(2+) site is built by Y53, G55, and G57. The active site involves H73. Residue D119 is part of the active site.

This sequence belongs to the phospholipase A2 family. Group I subfamily. G49 sub-subfamily. As to quaternary structure, heterodimer; disulfide-linked. The A chains have phospholipase A2 activity and the B chains show homology with the basic protease inhibitors. It depends on Ca(2+) as a cofactor. Post-translationally, this enzyme lacks one of the seven disulfide bonds found in similar PLA2 proteins. In terms of tissue distribution, expressed by the venom gland.

It localises to the secreted. It catalyses the reaction a 1,2-diacyl-sn-glycero-3-phosphocholine + H2O = a 1-acyl-sn-glycero-3-phosphocholine + a fatty acid + H(+). In terms of biological role, snake venom phospholipase A2 (PLA2) that inhibits neuromuscular transmission by blocking acetylcholine release from the nerve termini. PLA2 catalyzes the calcium-dependent hydrolysis of the 2-acyl groups in 3-sn-phosphoglycerides. The sequence is that of Basic phospholipase A2 beta-bungarotoxin A-AL1 chain from Bungarus multicinctus (Many-banded krait).